A 203-amino-acid chain; its full sequence is 3-isopropylmalate dehydratase small subunit (203 aa).

Belongs to the LeuD family. LeuD type 1 subfamily. As to quaternary structure, heterodimer of LeuC and LeuD.

It carries out the reaction (2R,3S)-3-isopropylmalate = (2S)-2-isopropylmalate. It functions in the pathway amino-acid biosynthesis; L-leucine biosynthesis; L-leucine from 3-methyl-2-oxobutanoate: step 2/4. Its function is as follows. Catalyzes the isomerization between 2-isopropylmalate and 3-isopropylmalate, via the formation of 2-isopropylmaleate. The protein is 3-isopropylmalate dehydratase small subunit of Symbiobacterium thermophilum (strain DSM 24528 / JCM 14929 / IAM 14863 / T).